The primary structure comprises 302 residues: Ribosomal RNA small subunit methyltransferase H (302 aa).

Residues 36–38, Asp-56, Phe-84, Asp-99, and Gln-106 contribute to the S-adenosyl-L-methionine site; that span reads GGH.

The protein belongs to the methyltransferase superfamily. RsmH family.

The protein localises to the cytoplasm. The enzyme catalyses cytidine(1402) in 16S rRNA + S-adenosyl-L-methionine = N(4)-methylcytidine(1402) in 16S rRNA + S-adenosyl-L-homocysteine + H(+). In terms of biological role, specifically methylates the N4 position of cytidine in position 1402 (C1402) of 16S rRNA. This Flavobacterium johnsoniae (strain ATCC 17061 / DSM 2064 / JCM 8514 / BCRC 14874 / CCUG 350202 / NBRC 14942 / NCIMB 11054 / UW101) (Cytophaga johnsonae) protein is Ribosomal RNA small subunit methyltransferase H.